We begin with the raw amino-acid sequence, 936 residues long: MDGEMAIIESSNHVGTSSPTTETQFTIDSSALKDQETKESITNSPTSEVPIETKLPKSSDIVTEEKHPQNTTTDIENEVENPVTDDNGNLKLELPDNLDNADFSKLLEFDAKNDEALFNSNELLSHTMDPVNNIDLTHDHSREVSSKEDINIEPVNPDEDEREKTQDNTAAVKTEGIRNSEDTSIQKDEPTADAIYTDVHKLSVNKDTETLPTLVDEKNNMLHMRNNSITPIMFQQHELVGQPPQNTVTENNSTDAETTQRKLSEPIDASLPLPNEQPTIFAYARLDFQSFTFYVQTLHAIIGRRSENDFSHKVDVNLGPSKSISRRHAQIFYNFGTGRFELSIIGKNGAFVDDIFVEKGNTVPLRNKTKIQIGQIPFQFILPEQERNDDSKSPENADIAESEINTRNLKKNEPKSKKKITTGAKPKKAQTKPAVKKEKKPPKIPKKVYTLEEIPVEYRTKPTVSYSAMLTTCIRKYSTAKGMSLSEIYAGIRELFPYYKYCPDGWQSSVRHNLSLNKSFRKVSKEGKGWLWGLDEEYIAERERQKKKQSEIAVAKAQAAQLKLEQQQHKLQQVPQRGKKDIVSQRSNVNARKQNISQTLAANRAASNRKNTASDNQRTMKYLQEQLVILTRDRKGLSKQVIAAILTQALAMTINQVTQAAKNKGITGNPLTALMDKNPQHLNLILAAAVNAATAKVTKGEVKQLVNPETTAAAALAAKAQHSKPIRQPIVQTPHVPDRPPSQLSASASSHPNNYLHDKQPGSFDPSSLSRFFQPRQNARATSSVAATSVPAAASQNVDAQPKPKPAQDNDLESESGTSSSSSSSSESGSESDSGSDDGSASGSGDNSSTSSESESESDSGSEVDEKNNKNEKIDSESIKNNESKDDIPSKDENSSNDNREISKTDEEGHDSKRRKVSEDINEGITEVNVSLEEKL.

Disordered stretches follow at residues 1 to 90 and 139 to 169; these read MDGE…NGNL and DHSR…QDNT. Positions 9-29 are enriched in polar residues; sequence ESSNHVGTSSPTTETQFTIDS. A Phosphoserine modification is found at Ser-44. Residues 139–150 show a composition bias toward basic and acidic residues; that stretch reads DHSREVSSKEDI. Ser-228 carries the phosphoserine modification. Residues Thr-230 and Thr-247 each carry the phosphothreonine modification. Residues 243 to 257 show a composition bias toward polar residues; that stretch reads PPQNTVTENNSTDAE. Positions 243-270 are disordered; it reads PPQNTVTENNSTDAETTQRKLSEPIDAS. A Phosphoserine modification is found at Ser-264. Residues 300–357 form the FHA domain; it reads AIIGRRSENDFSHKVDVNLGPSKSISRRHAQIFYNFGTGRFELSIIGKNGAFVDDIFV. Residues 384–395 show a composition bias toward basic and acidic residues; sequence EQERNDDSKSPE. The interval 384-442 is disordered; sequence EQERNDDSKSPENADIAESEINTRNLKKNEPKSKKKITTGAKPKKAQTKPAVKKEKKPP. Positions 416–430 are enriched in basic residues; it reads SKKKITTGAKPKKAQ. The fork-head DNA-binding region spans 460-552; that stretch reads TKPTVSYSAM…ERQKKKQSEI (93 aa). Residues 718 to 936 are disordered; the sequence is AKAQHSKPIR…EVNVSLEEKL (219 aa). 2 stretches are compositionally biased toward polar residues: residues 742–753 and 765–777; these read SQLSASASSHPN and DPSS…QPRQ. Composition is skewed to low complexity over residues 779 to 795 and 815 to 853; these read ARAT…AAAS and ESGT…TSSE. Residues 854–863 are compositionally biased toward acidic residues; it reads SESESDSGSE. Residues 864–911 show a composition bias toward basic and acidic residues; sequence VDEKNNKNEKIDSESIKNNESKDDIPSKDENSSNDNREISKTDEEGHD.

The protein localises to the nucleus. Functionally, acts as a transcriptional regulator that recruits coactivator IFH1 to the promoters of ribosomal protein genes. Recruited to ribosomal gene promoters by RAP1. The sequence is that of Pre-rRNA-processing protein FHL1 (FHL1) from Saccharomyces cerevisiae (strain ATCC 204508 / S288c) (Baker's yeast).